The primary structure comprises 92 residues: Long neurotoxin 3FTx-Oxy1 (92 aa).

The first 21 residues, 1-21 (MKTLLLTLVVVTIVCLDLGYT), serve as a signal peptide directing secretion. Cystine bridges form between cysteine 24/cysteine 42, cysteine 35/cysteine 63, cysteine 48/cysteine 52, cysteine 67/cysteine 79, and cysteine 80/cysteine 85.

It belongs to the three-finger toxin family. Long-chain subfamily. Type II alpha-neurotoxin sub-subfamily. Expressed by the venom gland.

It localises to the secreted. Its function is as follows. Binds with high affinity to muscular (alpha-1/CHRNA1) and neuronal (alpha-7/CHRNA7) nicotinic acetylcholine receptor (nAChR) and inhibits acetylcholine from binding to the receptor, thereby impairing neuromuscular and neuronal transmission. This Oxyuranus microlepidotus (Inland taipan) protein is Long neurotoxin 3FTx-Oxy1.